Consider the following 50-residue polypeptide: Large ribosomal subunit protein bL32 (50 aa).

Residues 1-26 (MAVPKRRVSHTRSAKRRTHYKITLKK) are compositionally biased toward basic residues. Residues 1-50 (MAVPKRRVSHTRSAKRRTHYKITLKKPVKDSDGSWKMPHMVNPNTGEYKN) form a disordered region.

The protein belongs to the bacterial ribosomal protein bL32 family.

This chain is Large ribosomal subunit protein bL32, found in Aliarcobacter butzleri (strain RM4018) (Arcobacter butzleri).